The primary structure comprises 437 residues: Probable inactive DNA (cytosine-5)-methyltransferase DRM1B (437 aa).

UBA domains lie at 20–60 and 120–164; these read SAPS…LLQL and EMSE…IYAP. The SAM-dependent MTase DRM-type domain maps to 243 to 437; sequence VHRNLPDHAL…LIQLHTTSLC (195 aa).

Belongs to the class I-like SAM-binding methyltransferase superfamily. DRM-methyltransferase family.

The protein localises to the nucleus. In terms of biological role, involved in de novo DNA methylation. Involved in RNA-directed DNA methylation (RdDM). This chain is Probable inactive DNA (cytosine-5)-methyltransferase DRM1B, found in Oryza sativa subsp. japonica (Rice).